A 260-amino-acid polypeptide reads, in one-letter code: 2-amino-5-formylamino-6-ribosylaminopyrimidin-4(3H)-one 5'-monophosphate deformylase (260 aa).

Residues E33, H35, D44, and H112 each contribute to the Fe cation site.

Belongs to the creatininase superfamily. FAPy deformylase family. As to quaternary structure, homodimer. Fe(2+) is required as a cofactor. Zn(2+) serves as cofactor.

The catalysed reaction is 2-amino-5-formylamino-6-(5-phospho-D-ribosylamino)pyrimidin-4(3H)-one + H2O = 2,5-diamino-6-(1-D-ribosylamino)pyrimidin-4(3H)-one 5'-phosphate + formate + H(+). The protein operates within cofactor biosynthesis; coenzyme F420 biosynthesis. It functions in the pathway cofactor biosynthesis; riboflavin biosynthesis. In terms of biological role, catalyzes the hydrolysis of the formamide of 2-amino-5-formylamino-6-ribosylamino-4(3H)-pyrimidinone 5'-monophosphate (FAPy) to form 2,5-diamino-6-ribosylamino-4(3H)-pyrimidinone 5'-phosphate (APy). This is 2-amino-5-formylamino-6-ribosylaminopyrimidin-4(3H)-one 5'-monophosphate deformylase from Methanococcus voltae (strain ATCC BAA-1334 / A3).